A 321-amino-acid polypeptide reads, in one-letter code: Tyrosine recombinase XerC (321 aa).

The Core-binding (CB) domain occupies serine 16–glutamate 107. The 188-residue stretch at serine 128–arginine 315 folds into the Tyr recombinase domain. Residues arginine 173, lysine 199, histidine 267, arginine 270, and histidine 293 contribute to the active site. Tyrosine 302 (O-(3'-phospho-DNA)-tyrosine intermediate) is an active-site residue.

Belongs to the 'phage' integrase family. XerC subfamily. As to quaternary structure, forms a cyclic heterotetrameric complex composed of two molecules of XerC and two molecules of XerD.

The protein localises to the cytoplasm. Functionally, site-specific tyrosine recombinase, which acts by catalyzing the cutting and rejoining of the recombining DNA molecules. The XerC-XerD complex is essential to convert dimers of the bacterial chromosome into monomers to permit their segregation at cell division. It also contributes to the segregational stability of plasmids. The chain is Tyrosine recombinase XerC from Nitrobacter winogradskyi (strain ATCC 25391 / DSM 10237 / CIP 104748 / NCIMB 11846 / Nb-255).